A 363-amino-acid polypeptide reads, in one-letter code: NAD(P)H-quinone oxidoreductase subunit 1, chloroplastic (363 aa).

A run of 8 helical transmembrane segments spans residues 30-50, 98-118, 127-147, 165-185, 203-223, 248-268, 300-320, and 336-356; these read LVPI…IVWL, FSIG…VIPF, LSIG…GLLM, AAQS…ISLL, FWGW…ISSL, YSGI…LVSS, VFGT…FLFI, and LLNL…LLTT.

It belongs to the complex I subunit 1 family. In terms of assembly, NDH is composed of at least 16 different subunits, 5 of which are encoded in the nucleus.

It localises to the plastid. The protein localises to the chloroplast thylakoid membrane. The enzyme catalyses a plastoquinone + NADH + (n+1) H(+)(in) = a plastoquinol + NAD(+) + n H(+)(out). The catalysed reaction is a plastoquinone + NADPH + (n+1) H(+)(in) = a plastoquinol + NADP(+) + n H(+)(out). In terms of biological role, NDH shuttles electrons from NAD(P)H:plastoquinone, via FMN and iron-sulfur (Fe-S) centers, to quinones in the photosynthetic chain and possibly in a chloroplast respiratory chain. The immediate electron acceptor for the enzyme in this species is believed to be plastoquinone. Couples the redox reaction to proton translocation, and thus conserves the redox energy in a proton gradient. In Solanum lycopersicum (Tomato), this protein is NAD(P)H-quinone oxidoreductase subunit 1, chloroplastic.